Consider the following 316-residue polypeptide: Long form salivary protein D7L1 (316 aa).

The signal sequence occupies residues 1–23 (MSHTRAVVLAVACLCLILVQVEG). 4 disulfides stabilise this stretch: Cys-40–Cys-76, Cys-72–Cys-131, Cys-181–Cys-214, and Cys-255–Cys-266.

This sequence belongs to the PBP/GOBP family.

It is found in the secreted. In terms of biological role, modulates blood feeding of female mosquitoes on vertebrate species by binding and sequestering different mediators involved in the host response, such as biogenic amines and eicosanoids. Binds serotonin, tryptamine, histamine, leukotriene C4, leukotriene D4 and leukotriene E4. Does not bind octopamine, dopamine, noradrenaline, adrenaline and prostaglandin PGF2alpha. The sequence is that of Long form salivary protein D7L1 from Anopheles atroparvus (European mosquito).